The sequence spans 179 residues: Large ribosomal subunit protein uL5 (179 aa).

It belongs to the universal ribosomal protein uL5 family. Part of the 50S ribosomal subunit; part of the 5S rRNA/L5/L18/L25 subcomplex. Contacts the 5S rRNA and the P site tRNA. Forms a bridge to the 30S subunit in the 70S ribosome.

Its function is as follows. This is one of the proteins that bind and probably mediate the attachment of the 5S RNA into the large ribosomal subunit, where it forms part of the central protuberance. In the 70S ribosome it contacts protein S13 of the 30S subunit (bridge B1b), connecting the 2 subunits; this bridge is implicated in subunit movement. Contacts the P site tRNA; the 5S rRNA and some of its associated proteins might help stabilize positioning of ribosome-bound tRNAs. The polypeptide is Large ribosomal subunit protein uL5 (Marinobacter nauticus (strain ATCC 700491 / DSM 11845 / VT8) (Marinobacter aquaeolei)).